A 318-amino-acid chain; its full sequence is Basic leucine zipper (bZIP) transcription factor atfB (318 aa).

The tract at residues 114–157 (FNSSPPEYAPPKHRSSLSEQSQTDGYGVSTRRRKASAIDQCEQQ) is disordered. Residues 160–199 (REKREKFLERNRLAASKCRQKKKEHTKLLETRFREVSNKK) form a basic motif region. The region spanning 160-223 (REKREKFLER…LNLKNEMLRH (64 aa)) is the bZIP domain. Residues 202-216 (LESEIEHLRSEVLNL) are leucine-zipper. The interval 275–301 (DGPMQLPSEMGSPLDQRRDSEQSIMTE) is disordered.

This sequence belongs to the bZIP family. ATF subfamily.

It localises to the nucleus. Functionally, transcription factor that acts as a key player in the regulatory circuit that integrates secondary metabolism and cellular response to oxidative stress. Regulates the genes involved in development and stress response through direct binding to their promoters. Particularly involved in the resistance to oxidative stress in asexual conidiospores. This Aspergillus oryzae (strain ATCC 42149 / RIB 40) (Yellow koji mold) protein is Basic leucine zipper (bZIP) transcription factor atfB.